The chain runs to 561 residues: Membrane protein insertase YidC (561 aa).

The next 6 membrane-spanning stretches (helical) occupy residues isoleucine 7–tyrosine 27, leucine 342–leucine 362, leucine 368–phenylalanine 388, leucine 438–leucine 458, tryptophan 469–methionine 489, and proline 516–valine 536.

This sequence belongs to the OXA1/ALB3/YidC family. Type 1 subfamily. Interacts with the Sec translocase complex via SecD. Specifically interacts with transmembrane segments of nascent integral membrane proteins during membrane integration.

The protein localises to the cell inner membrane. In terms of biological role, required for the insertion and/or proper folding and/or complex formation of integral membrane proteins into the membrane. Involved in integration of membrane proteins that insert both dependently and independently of the Sec translocase complex, as well as at least some lipoproteins. Aids folding of multispanning membrane proteins. In Pseudomonas entomophila (strain L48), this protein is Membrane protein insertase YidC.